The chain runs to 248 residues: 5'-nucleotidase SurE (248 aa).

Residues Asp-8, Asp-9, Ser-39, and Asn-91 each contribute to the a divalent metal cation site.

This sequence belongs to the SurE nucleotidase family. A divalent metal cation serves as cofactor.

The protein resides in the cytoplasm. It catalyses the reaction a ribonucleoside 5'-phosphate + H2O = a ribonucleoside + phosphate. Functionally, nucleotidase that shows phosphatase activity on nucleoside 5'-monophosphates. The sequence is that of 5'-nucleotidase SurE from Neisseria meningitidis serogroup B (strain ATCC BAA-335 / MC58).